We begin with the raw amino-acid sequence, 81 residues long: Photosystem I iron-sulfur center (81 aa).

2 consecutive 4Fe-4S ferredoxin-type domains span residues Ser2 to Trp31 and Gly37 to Tyr68. 8 residues coordinate [4Fe-4S] cluster: Cys11, Cys14, Cys17, Cys21, Cys48, Cys51, Cys54, and Cys58.

In terms of assembly, the cyanobacterial PSI reaction center is composed of one copy each of PsaA,B,C,D,E,F,I,J,K,L,M and X, and forms trimeric complexes. The cofactor is [4Fe-4S] cluster.

Its subcellular location is the cellular thylakoid membrane. The catalysed reaction is reduced [plastocyanin] + hnu + oxidized [2Fe-2S]-[ferredoxin] = oxidized [plastocyanin] + reduced [2Fe-2S]-[ferredoxin]. Apoprotein for the two 4Fe-4S centers FA and FB of photosystem I (PSI); essential for photochemical activity. FB is the terminal electron acceptor of PSI, donating electrons to ferredoxin. The C-terminus interacts with PsaA/B/D and helps assemble the protein into the PSI complex. Required for binding of PsaD and PsaE to PSI. PSI is a plastocyanin/cytochrome c6-ferredoxin oxidoreductase, converting photonic excitation into a charge separation, which transfers an electron from the donor P700 chlorophyll pair to the spectroscopically characterized acceptors A0, A1, FX, FA and FB in turn. This is Photosystem I iron-sulfur center from Prochlorococcus marinus subsp. pastoris (strain CCMP1986 / NIES-2087 / MED4).